Consider the following 371-residue polypeptide: ATP-dependent protease ATP-binding subunit-like protein AmiB (371 aa).

96-103 (GPTGVGKT) contributes to the ATP binding site.

It belongs to the ClpX chaperone family. The cofactor is Mg(2+).

Functionally, unlikely to encode a regulatory protein. Has ATPase activity. AmiB and AmiS may act jointly into a two component ABC transporter system. This is ATP-dependent protease ATP-binding subunit-like protein AmiB (amiB) from Pseudomonas aeruginosa (strain ATCC 15692 / DSM 22644 / CIP 104116 / JCM 14847 / LMG 12228 / 1C / PRS 101 / PAO1).